The following is a 20-amino-acid chain: Antifungal protein 2 large subunit (20 aa).

The tract at residues 1-20 is disordered; it reads PEDPQRRYQEXQREXRXQQE.

In terms of assembly, heterodimer of a large and a small subunit.

Functionally, possesses antifungal activity against P.infestans but not F.graminearum. This chain is Antifungal protein 2 large subunit, found in Malva parviflora (Little mallow).